A 200-amino-acid polypeptide reads, in one-letter code: Large ribosomal subunit protein bL25 (200 aa).

This sequence belongs to the bacterial ribosomal protein bL25 family. CTC subfamily. As to quaternary structure, part of the 50S ribosomal subunit; part of the 5S rRNA/L5/L18/L25 subcomplex. Contacts the 5S rRNA. Binds to the 5S rRNA independently of L5 and L18.

Functionally, this is one of the proteins that binds to the 5S RNA in the ribosome where it forms part of the central protuberance. The protein is Large ribosomal subunit protein bL25 of Nocardia farcinica (strain IFM 10152).